The sequence spans 344 residues: Oxygen sensor histidine kinase NreB (344 aa).

The [4Fe-4S] cluster site is built by C58, C61, C73, and C76. The Histidine kinase domain occupies 152-344; sequence RISRELHDSV…GTNVTLNIPI (193 aa). A Phosphohistidine; by autocatalysis modification is found at H158.

It depends on [4Fe-4S] cluster as a cofactor. Post-translationally, autophosphorylated.

The protein resides in the cytoplasm. It carries out the reaction ATP + protein L-histidine = ADP + protein N-phospho-L-histidine.. Its function is as follows. Member of the two-component regulatory system NreB/NreC involved in the control of dissimilatory nitrate/nitrite reduction in response to oxygen. NreB functions as a direct oxygen sensor histidine kinase which is autophosphorylated, in the absence of oxygen, probably at the conserved histidine residue, and transfers its phosphate group probably to a conserved aspartate residue of NreC. NreB/NreC activates the expression of the nitrate (narGHJI) and nitrite (nir) reductase operons, as well as the putative nitrate transporter gene narT. This Staphylococcus aureus (strain JH1) protein is Oxygen sensor histidine kinase NreB (nreB).